The sequence spans 231 residues: Small ribosomal subunit protein uS2 (231 aa).

This sequence belongs to the universal ribosomal protein uS2 family.

This is Small ribosomal subunit protein uS2 from Blochmanniella floridana.